The chain runs to 728 residues: 1,4-alpha-glucan branching enzyme GlgB (728 aa).

Residue Asp-405 is the Nucleophile of the active site. Glu-458 (proton donor) is an active-site residue.

Belongs to the glycosyl hydrolase 13 family. GlgB subfamily. As to quaternary structure, monomer.

It catalyses the reaction Transfers a segment of a (1-&gt;4)-alpha-D-glucan chain to a primary hydroxy group in a similar glucan chain.. It participates in glycan biosynthesis; glycogen biosynthesis. Catalyzes the formation of the alpha-1,6-glucosidic linkages in glycogen by scission of a 1,4-alpha-linked oligosaccharide from growing alpha-1,4-glucan chains and the subsequent attachment of the oligosaccharide to the alpha-1,6 position. This is 1,4-alpha-glucan branching enzyme GlgB from Klebsiella pneumoniae subsp. pneumoniae (strain ATCC 700721 / MGH 78578).